We begin with the raw amino-acid sequence, 169 residues long: MATGPRYRVPFRRRREGRTNYHVRYRLILSRKPRVVVRKGNANITIQLIIAELKGDRTLLTVSSKELRNYGFQHSTGNVPAAYLTGLLFGKKMLALGYNEGILDIGLHSNSRGSRVYAALKGVVDAGVDVPHSPEVFPDDSRIRGEVIRDYTGVDVVSQFEAAREKILG.

It belongs to the universal ribosomal protein uL18 family. Part of the 50S ribosomal subunit. Contacts the 5S and 23S rRNAs.

In terms of biological role, this is one of the proteins that bind and probably mediate the attachment of the 5S RNA into the large ribosomal subunit, where it forms part of the central protuberance. The polypeptide is Large ribosomal subunit protein uL18 (Methanothrix thermoacetophila (strain DSM 6194 / JCM 14653 / NBRC 101360 / PT) (Methanosaeta thermophila)).